The following is a 287-amino-acid chain: Toxin zeta (287 aa).

40 to 47 (GQPGSGKT) contributes to the ATP binding site. Asn-66 is a substrate binding site. The active-site Proton acceptor is the Asp-67. Substrate-binding residues include Glu-100, Thr-118, Arg-120, and Thr-128. Residues 267–287 (KLESLQPPTPPIPKTPKLPGI) are disordered. Residues 273–287 (PPTPPIPKTPKLPGI) are compositionally biased toward pro residues.

Belongs to the zeta toxin family. In the presence of the epsilon antitoxin forms an inactive PezA(2)PezT(2) heterotetramer. The heterotetramer is still able to bind the UNAG substrate.

The enzyme catalyses UDP-N-acetyl-alpha-D-glucosamine + ATP = UDP-N-acetyl-alpha-D-glucosamine 3'-phosphate + ADP + H(+). Its function is as follows. Toxic component of a type II toxin-antitoxin (TA) system. Phosphorylates UDP-N-acetyl-D-glucosamine (UNAG) on the 3'-hydroxyl group of the N-acetyl-D-glucosamine moiety, yielding UNAG-3P. UNAG-3P inhibits MurA, the first committed step in cell wall synthesis, which is then blocked. Phosphorylation is inhibited by cognate epsilon antitoxin. Part of a postsegregational killing (PSK) system involved in the killing of plasmid-free cells. The zeta toxin induces programmed cell death. This Streptococcus pyogenes protein is Toxin zeta.